The primary structure comprises 236 residues: Class B acid phosphatase (236 aa).

Positions 1-22 are cleaved as a signal peptide; the sequence is MKNVMKLSVIALLTAAAVPAMA. Residue Asp67 is the Nucleophile of the active site. The Mg(2+) site is built by Asp67 and Asp69. Residue Asp69 is the Proton donor of the active site. Substrate-binding positions include 136-137 and Lys176; that span reads TG. Asp191 provides a ligand contact to Mg(2+).

This sequence belongs to the class B bacterial acid phosphatase family. Homotetramer. Mg(2+) is required as a cofactor.

Its subcellular location is the periplasm. The enzyme catalyses a phosphate monoester + H2O = an alcohol + phosphate. Functionally, dephosphorylates several organic phosphate monoesters. Also has a phosphotransferase activity catalyzing the transfer of low-energy phosphate groups from organic phosphate monoesters to free hydroxyl groups of various organic compounds. This is Class B acid phosphatase (aphA) from Haemophilus influenzae (strain ATCC 51907 / DSM 11121 / KW20 / Rd).